We begin with the raw amino-acid sequence, 90 residues long: Small ribosomal subunit protein uS15c (90 aa).

It belongs to the universal ribosomal protein uS15 family. Part of the 30S ribosomal subunit.

The protein resides in the plastid. It localises to the chloroplast. This Populus alba (White poplar) protein is Small ribosomal subunit protein uS15c (rps15).